The sequence spans 842 residues: Protein translocase subunit SecA (842 aa).

Residues glutamine 85, 103 to 107 (GEGKT), and aspartate 493 each bind ATP. Zn(2+) contacts are provided by cysteine 825, cysteine 827, cysteine 836, and histidine 837.

It belongs to the SecA family. In terms of assembly, monomer and homodimer. Part of the essential Sec protein translocation apparatus which comprises SecA, SecYEG and auxiliary proteins SecDF. Other proteins may also be involved. The cofactor is Zn(2+).

It localises to the cell membrane. The protein resides in the cytoplasm. The enzyme catalyses ATP + H2O + cellular proteinSide 1 = ADP + phosphate + cellular proteinSide 2.. In terms of biological role, part of the Sec protein translocase complex. Interacts with the SecYEG preprotein conducting channel. Has a central role in coupling the hydrolysis of ATP to the transfer of proteins into and across the cell membrane, serving as an ATP-driven molecular motor driving the stepwise translocation of polypeptide chains across the membrane. The chain is Protein translocase subunit SecA from Streptococcus equi subsp. zooepidemicus (strain MGCS10565).